The following is a 124-amino-acid chain: Small ribosomal subunit protein uS12 (124 aa).

Asp89 carries the 3-methylthioaspartic acid modification.

The protein belongs to the universal ribosomal protein uS12 family. In terms of assembly, part of the 30S ribosomal subunit. Contacts proteins S8 and S17. May interact with IF1 in the 30S initiation complex.

Functionally, with S4 and S5 plays an important role in translational accuracy. In terms of biological role, interacts with and stabilizes bases of the 16S rRNA that are involved in tRNA selection in the A site and with the mRNA backbone. Located at the interface of the 30S and 50S subunits, it traverses the body of the 30S subunit contacting proteins on the other side and probably holding the rRNA structure together. The combined cluster of proteins S8, S12 and S17 appears to hold together the shoulder and platform of the 30S subunit. In Proteus mirabilis (strain HI4320), this protein is Small ribosomal subunit protein uS12.